The following is a 177-amino-acid chain: ATP synthase subunit delta (177 aa).

This sequence belongs to the ATPase delta chain family. In terms of assembly, F-type ATPases have 2 components, F(1) - the catalytic core - and F(0) - the membrane proton channel. F(1) has five subunits: alpha(3), beta(3), gamma(1), delta(1), epsilon(1). F(0) has three main subunits: a(1), b(2) and c(10-14). The alpha and beta chains form an alternating ring which encloses part of the gamma chain. F(1) is attached to F(0) by a central stalk formed by the gamma and epsilon chains, while a peripheral stalk is formed by the delta and b chains.

It localises to the cell inner membrane. In terms of biological role, f(1)F(0) ATP synthase produces ATP from ADP in the presence of a proton or sodium gradient. F-type ATPases consist of two structural domains, F(1) containing the extramembraneous catalytic core and F(0) containing the membrane proton channel, linked together by a central stalk and a peripheral stalk. During catalysis, ATP synthesis in the catalytic domain of F(1) is coupled via a rotary mechanism of the central stalk subunits to proton translocation. Its function is as follows. This protein is part of the stalk that links CF(0) to CF(1). It either transmits conformational changes from CF(0) to CF(1) or is implicated in proton conduction. This Klebsiella pneumoniae subsp. pneumoniae (strain ATCC 700721 / MGH 78578) protein is ATP synthase subunit delta.